Consider the following 62-residue polypeptide: Chromatin protein Cren7 1 (62 aa).

It belongs to the Cren7 family. Monomer. Methylated at multiple sites, to varying extents.

The protein resides in the chromosome. It localises to the cytoplasm. In terms of biological role, a chromatin protein, binds double-stranded DNA without sequence specificity. Constrains negative DNA supercoils. The protein is Chromatin protein Cren7 1 (cren7-1) of Hyperthermus butylicus (strain DSM 5456 / JCM 9403 / PLM1-5).